The sequence spans 304 residues: Acetylglutamate kinase (304 aa).

Substrate is bound by residues G75 to G76, R97, and N196.

Belongs to the acetylglutamate kinase family. ArgB subfamily.

It is found in the cytoplasm. It carries out the reaction N-acetyl-L-glutamate + ATP = N-acetyl-L-glutamyl 5-phosphate + ADP. It participates in amino-acid biosynthesis; L-arginine biosynthesis; N(2)-acetyl-L-ornithine from L-glutamate: step 2/4. In terms of biological role, catalyzes the ATP-dependent phosphorylation of N-acetyl-L-glutamate. The sequence is that of Acetylglutamate kinase from Corynebacterium urealyticum (strain ATCC 43042 / DSM 7109).